The sequence spans 509 residues: Telomeric repeat-binding factor 2-interacting protein 1 (509 aa).

A BRCT domain is found at 1 to 91 (MAALGGLTHS…KLLDVDDYRL (91 aa)). Residues 93–168 (GSHGRPRKSQ…RKKENKMDCS (76 aa)) form a disordered region. Polar residues predominate over residues 115–127 (VGESSQESDQKQQ). The segment covering 159–168 (RKKENKMDCS) has biased composition (basic and acidic residues). The 55-residue stretch at 185–239 (RRNVFTEKEDVAIMLYVRENAPHRGTGVSLWKEMEQKQVVKRTWQAIKNRYFRYL) folds into the Myb-like domain. Disordered stretches follow at residues 249-359 (LTDD…ENQD) and 399-423 (DLPS…ESEG). 2 stretches are compositionally biased toward basic and acidic residues: residues 286 to 296 (GVAEKTGEKLS) and 321 to 344 (VEER…KSTE). The span at 401–418 (PSSQSQTQVDEVSSSPDA) shows a compositional bias: polar residues. Residues 493–509 (QKYGADNVAKRVAFLAS) carry the Nuclear localization signal motif.

Belongs to the RAP1 family. Homodimer. Component of the shelterin complex (telosome). Interacts with terf2; the interaction is direct.

The protein localises to the nucleus. It is found in the chromosome. Its subcellular location is the telomere. Functionally, acts both as a regulator of telomere function and as a transcription regulator. Involved in the regulation of telomere length and protection as a component of the shelterin complex (telosome). Does not bind DNA directly: recruited to telomeric double-stranded 5'-TTAGGG-3' repeats via its interaction with terf2. Independently of its function in telomeres, also acts as a transcription regulator: recruited to extratelomeric 5'-TTAGGG-3' sites via its association with terf2 or other factors, and regulates gene expression. The polypeptide is Telomeric repeat-binding factor 2-interacting protein 1 (terf2ip) (Xenopus tropicalis (Western clawed frog)).